We begin with the raw amino-acid sequence, 215 residues long: Peroxiredoxin (215 aa).

The region spanning Pro3–Val158 is the Thioredoxin domain. Cys45 acts as the Cysteine sulfenic acid (-SOH) intermediate in catalysis. Position 121 (Arg121) interacts with substrate. Cysteines 205 and 211 form a disulfide.

Belongs to the peroxiredoxin family. Prx6 subfamily. As to quaternary structure, homodecamer. Pentamer of dimers that assemble into a ring structure.

Its subcellular location is the cytoplasm. The catalysed reaction is a hydroperoxide + [thioredoxin]-dithiol = an alcohol + [thioredoxin]-disulfide + H2O. Thiol-specific peroxidase that catalyzes the reduction of hydrogen peroxide and organic hydroperoxides to water and alcohols, respectively. Plays a role in cell protection against oxidative stress by detoxifying peroxides. This Archaeoglobus fulgidus (strain ATCC 49558 / DSM 4304 / JCM 9628 / NBRC 100126 / VC-16) protein is Peroxiredoxin.